Here is a 347-residue protein sequence, read N- to C-terminus: Ubiquinone biosynthesis protein coq-4, mitochondrial (347 aa).

Residues 1-49 constitute a mitochondrion transit peptide; it reads MEVTALRRSAALVARASSQNAIRPAVCAAISSTSPTPPTQIQTQQTRQF. Residues H185, D186, H189, and E201 each contribute to the Zn(2+) site. The segment at 284–310 is disordered; sequence IRKREREEKRRRKEMERMLSGRGTEDV.

It belongs to the COQ4 family. In terms of assembly, component of a multi-subunit COQ enzyme complex, composed of at least coq-3, coq-4, coq-5, coq-6, coq-7 and coq-9. Zn(2+) serves as cofactor.

It localises to the mitochondrion inner membrane. The catalysed reaction is a 4-hydroxy-3-methoxy-5-(all-trans-polyprenyl)benzoate + H(+) = a 2-methoxy-6-(all-trans-polyprenyl)phenol + CO2. Its pathway is cofactor biosynthesis; ubiquinone biosynthesis. In terms of biological role, lyase that catalyzes the C1-decarboxylation of 4-hydroxy-3-methoxy-5-(all-trans-polyprenyl)benzoic acid into 2-methoxy-6-(all-trans-polyprenyl)phenol during ubiquinone biosynthesis. In Neurospora crassa (strain ATCC 24698 / 74-OR23-1A / CBS 708.71 / DSM 1257 / FGSC 987), this protein is Ubiquinone biosynthesis protein coq-4, mitochondrial.